The primary structure comprises 388 residues: Succinate--CoA ligase [ADP-forming] subunit beta (388 aa).

One can recognise an ATP-grasp domain in the interval 9-244 (KQLFARYGLP…QSQEDPREAQ (236 aa)). Residues K46, 53–55 (GRG), E99, T102, and E107 contribute to the ATP site. Positions 199 and 213 each coordinate Mg(2+). Substrate is bound by residues N264 and 321 to 323 (GIV).

Belongs to the succinate/malate CoA ligase beta subunit family. As to quaternary structure, heterotetramer of two alpha and two beta subunits. It depends on Mg(2+) as a cofactor.

The catalysed reaction is succinate + ATP + CoA = succinyl-CoA + ADP + phosphate. It carries out the reaction GTP + succinate + CoA = succinyl-CoA + GDP + phosphate. It functions in the pathway carbohydrate metabolism; tricarboxylic acid cycle; succinate from succinyl-CoA (ligase route): step 1/1. In terms of biological role, succinyl-CoA synthetase functions in the citric acid cycle (TCA), coupling the hydrolysis of succinyl-CoA to the synthesis of either ATP or GTP and thus represents the only step of substrate-level phosphorylation in the TCA. The beta subunit provides nucleotide specificity of the enzyme and binds the substrate succinate, while the binding sites for coenzyme A and phosphate are found in the alpha subunit. The sequence is that of Succinate--CoA ligase [ADP-forming] subunit beta from Enterobacter sp. (strain 638).